We begin with the raw amino-acid sequence, 167 residues long: Single-stranded DNA-binding protein 2 (167 aa).

The region spanning Met-1–Glu-104 is the SSB domain. A disordered region spans residues Asn-107–Phe-167. Low complexity-rich tracts occupy residues Gln-109–Asn-118 and Ser-132–Ser-147. Residues Asp-162–Phe-167 carry the Important for interaction with partner proteins motif.

Homotetramer.

In terms of biological role, plays an important role in DNA replication, recombination and repair. Binds to ssDNA and to an array of partner proteins to recruit them to their sites of action during DNA metabolism. The sequence is that of Single-stranded DNA-binding protein 2 (ssb2) from Staphylococcus aureus (strain MSSA476).